Here is a 60-residue protein sequence, read N- to C-terminus: Large ribosomal subunit protein bL32 (60 aa).

The tract at residues 1–23 (MAVPKRKKSKSRRNMHRSHHAIK) is disordered.

The protein belongs to the bacterial ribosomal protein bL32 family.

The sequence is that of Large ribosomal subunit protein bL32 from Wolbachia sp. subsp. Brugia malayi (strain TRS).